Here is a 1428-residue protein sequence, read N- to C-terminus: MGARASVLSGKKLDSWEKIRLRPGGNKKYRLKHLVWASRELEKFTLNPGLLETAEGCQQILGQLQPALQTGTEELRSLYNTVAVLYCVHQRIDVKDTKEALNKIEEMQNKNKQRTQQAAANTGSSQNYPIVQNAQGQPVHQALSPRTLNAWVKVVEDKAFSPEVIPMFSALSEGATPQDLNMMLNVVGGHQAAMQMLKDTINEEAAEWDRLHPVHAGPIPPGQMREPRGSDIAGTTSTVQEQIGWMTGNPPIPVGDIYRRWIILGLNKIVRMYSPVSILDIRQGPKEPFRDYVDRFFKTLRAEQATQDVKNWMTETLLVQNANPDCKSILRALGPGATLEEMMTACQGVGGPGHKARVLAEAMSQVQQTSIMMQRGNFRGPRRIKCFNCGKEGHLAKNCRAPRKKGCWKCGKEGHQMKDCTERQANFLRENLAFQQGEAREFSSEQTRANSPTSRNLWDGGKDDLPCETGAERQGTDSFSFPQITLWQRPLVTVKIGGQLIEALLDTGADDTVLEDINLPGKWKPKIIGGIGGFIKVRQYDQILIEICGKKTIGTVLVGPTPVNIIGRNMLTQIGCTLNFPISPIETVPVKLKPEMDGPKVKQWPLTEEKIKALTEICNEMEKEGKISKIGPENPYNTPVFAIKKKDSTKWRKLVDFRELNKRTQDFWEVQLGIPHTAGLKKKKSVTVLDVGDAYFSVPLDESFRKYTAFTIPSINNETPGVRYQYNVLPQGWKGSPSIFQSSMTKILEPFRSQHPDIVIYQYMDDLYVGSDLEIGQHRAKIEELRAHLLSWGFITPDKKHQKEPPFLWMGYELHPDKWTVQPIQLPEKDSWTVNDIQKLVGKLNWASQIYAGIKVKQLCKLLRGAKALTDIVTLTEEAELELAENREILKDPVHGVYYDPSKDLVAEIQKQGQDQWTYQIYQEPFKNLKTGKYARKRSAHTNDVKQLTEVVQKVSTESIVIWGKIPKFRLPIQKETWEAWWMEYWQATWIPEWEFVNTPPLVKLWYQLEKDPIAGAETFYVDGAANRETKLGKAGYVTDRGRQKVVSLTETTNQKTELHAIHLALQDSGSEVNIVTDSQYALGIIQAQPDRSESEIVNQIIEKLIEKEKVYLSWVPAHKGIGGNEQVDKLVSSGIRKVLFLDGIDKAQEDHEKYHCNWRAMASDFNLPPVVAKEIVASCNKCQLKGEAMHGQVDCSPGIWQLDCTHLEGKVILVAVHVASGYIEAEVIPAETGQETAYFILKLAGRWPVKVIHTDNGSNFTSAAVKAVCWWANIQQEFGIPYNPQSQGVVESMNKELKKIIGQVREQAEHLKTAVQMAVFIHNFKRKGGIGGYSAGERIIDIIATDIQTKELQKQISKIQNFRVYYRDSRDPIWKGPAKLLWKGEGAVVIQDNSDIKVVPRRKAKIIRDYGKQMAGDDCMAGRQDED.

G2 carries N-myristoyl glycine; by host lipidation. Residues 7 to 31 (VLSGKKLDSWEKIRLRPGGNKKYRL) form an interaction with Gp41 region. The tract at residues 8–43 (LSGKKLDSWEKIRLRPGGNKKYRLKHLVWASRELEK) is interaction with host CALM1. The interval 12 to 19 (KLDSWEKI) is interaction with host AP3D1. Residues 14–33 (DSWEKIRLRPGGNKKYRLKH) form an interaction with membrane phosphatidylinositol 4,5-bisphosphate and RNA region. The Nuclear export signal signature appears at 16-22 (WEKIRLR). The short motif at 26–32 (NKKYRLK) is the Nuclear localization signal element. The tract at residues 73–77 (EELRS) is interaction with membrane phosphatidylinositol 4,5-bisphosphate. Residues 108 to 130 (QNKNKQRTQQAAANTGSSQNYPI) are disordered. The span at 114-130 (RTQQAAANTGSSQNYPI) shows a compositional bias: polar residues. At Y128 the chain carries Phosphotyrosine; by host. Residues 185-223 (NVVGGHQAAMQMLKDTINEEAAEWDRLHPVHAGPIPPGQ) are interaction with human PPIA/CYPA and NUP153. Positions 273 to 359 (YSPVSILDIR…GGPGHKARVL (87 aa)) are dimerization/Multimerization of capsid protein p24. 2 CCHC-type zinc fingers span residues 384–401 (IKCFNCGKEGHLAKNCRA) and 405–422 (KGCWKCGKEGHQMKDCTE). Positions 438 to 475 (EAREFSSEQTRANSPTSRNLWDGGKDDLPCETGAERQG) are disordered. A compositionally biased stretch (polar residues) spans 444–456 (SEQTRANSPTSRN). A compositionally biased stretch (basic and acidic residues) spans 460-475 (GGKDDLPCETGAERQG). The dimerization of protease stretch occupies residues 482 to 486 (PQITL). Positions 501–570 (IEALLDTGAD…TPVNIIGRNM (70 aa)) constitute a Peptidase A2 domain. The For protease activity; shared with dimeric partner role is filled by D506. Dimerization of protease regions lie at residues 530 to 536 (GIGGFIK) and 569 to 581 (NMLTQIGCTLNFP). The Reverse transcriptase domain occupies 624–814 (EGKISKIGPE…PPFLWMGYEL (191 aa)). Mg(2+)-binding residues include D690, D765, and D766. Positions 807–815 (FLWMGYELH) are RT 'primer grip'. The Tryptophan repeat motif motif lies at 978-994 (WEAWWMEYWQATWIPEW). Positions 1014-1137 (IAGAETFYVD…VDKLVSSGIR (124 aa)) constitute an RNase H type-1 domain. Mg(2+) contacts are provided by D1023, E1058, D1078, and D1129. Residues 1143–1184 (DGIDKAQEDHEKYHCNWRAMASDFNLPPVVAKEIVASCNKCQ) form an Integrase-type zinc finger. Residues H1152, H1156, C1180, and C1183 each coordinate Zn(2+). Residues 1194 to 1344 (VDCSPGIWQL…SAGERIIDII (151 aa)) enclose the Integrase catalytic domain. The Mg(2+) site is built by D1204, D1256, and E1292. Residues 1363–1410 (FRVYYRDSRDPIWKGPAKLLWKGEGAVVIQDNSDIKVVPRRKAKIIRD) constitute a DNA-binding region (integrase-type).

As to quaternary structure, homotrimer; further assembles as hexamers of trimers. Interacts with gp41 (via C-terminus). Interacts with host CALM1; this interaction induces a conformational change in the Matrix protein, triggering exposure of the myristate group. Interacts with host AP3D1; this interaction allows the polyprotein trafficking to multivesicular bodies during virus assembly. Part of the pre-integration complex (PIC) which is composed of viral genome, matrix protein, Vpr and integrase. Homodimer; the homodimer further multimerizes as homohexamers or homopentamers. Interacts with human PPIA/CYPA; This interaction stabilizes the capsid. Interacts with human NUP153. Interacts with host PDZD8; this interaction stabilizes the capsid. Interacts with monkey TRIM5; this interaction destabilizes the capsid. In terms of assembly, homodimer, whose active site consists of two apposed aspartic acid residues. As to quaternary structure, heterodimer of p66 RT and p51 RT (RT p66/p51). Heterodimerization of RT is essential for DNA polymerase activity. The overall folding of the subdomains is similar in p66 RT and p51 RT but the spatial arrangements of the subdomains are dramatically different. Homotetramer; may further associate as a homohexadecamer. Part of the pre-integration complex (PIC) which is composed of viral genome, matrix protein, Vpr and integrase. Interacts with human SMARCB1/INI1 and human PSIP1/LEDGF isoform 1. Interacts with human KPNA3; this interaction might play a role in nuclear import of the pre-integration complex. Interacts with human NUP153; this interaction might play a role in nuclear import of the pre-integration complex. Mg(2+) serves as cofactor. Specific enzymatic cleavages by the viral protease yield mature proteins. The protease is released by autocatalytic cleavage. The polyprotein is cleaved during and after budding, this process is termed maturation. Proteolytic cleavage of p66 RT removes the RNase H domain to yield the p51 RT subunit. Nucleocapsid protein p7 might be further cleaved after virus entry. In terms of processing, tyrosine phosphorylated presumably in the virion by a host kinase. Phosphorylation is apparently not a major regulator of membrane association. Post-translationally, phosphorylated possibly by host MAPK1; this phosphorylation is necessary for Pin1-mediated virion uncoating. Methylated by host PRMT6, impairing its function by reducing RNA annealing and the initiation of reverse transcription.

It localises to the host cell membrane. It is found in the host endosome. Its subcellular location is the host multivesicular body. The protein resides in the virion membrane. The protein localises to the host nucleus. It localises to the host cytoplasm. It is found in the virion. The enzyme catalyses Specific for a P1 residue that is hydrophobic, and P1' variable, but often Pro.. It carries out the reaction Endohydrolysis of RNA in RNA/DNA hybrids. Three different cleavage modes: 1. sequence-specific internal cleavage of RNA. Human immunodeficiency virus type 1 and Moloney murine leukemia virus enzymes prefer to cleave the RNA strand one nucleotide away from the RNA-DNA junction. 2. RNA 5'-end directed cleavage 13-19 nucleotides from the RNA end. 3. DNA 3'-end directed cleavage 15-20 nucleotides away from the primer terminus.. The catalysed reaction is 3'-end directed exonucleolytic cleavage of viral RNA-DNA hybrid.. It catalyses the reaction DNA(n) + a 2'-deoxyribonucleoside 5'-triphosphate = DNA(n+1) + diphosphate. Protease: The viral protease is inhibited by many synthetic protease inhibitors (PIs), such as amprenavir, atazanavir, indinavir, loprinavir, nelfinavir, ritonavir and saquinavir. Use of protease inhibitors in tritherapy regimens permit more ambitious therapeutic strategies. Reverse transcriptase/ribonuclease H: RT can be inhibited either by nucleoside RT inhibitors (NRTIs) or by non nucleoside RT inhibitors (NNRTIs). NRTIs act as chain terminators, whereas NNRTIs inhibit DNA polymerization by binding a small hydrophobic pocket near the RT active site and inducing an allosteric change in this region. Classical NRTIs are abacavir, adefovir (PMEA), didanosine (ddI), lamivudine (3TC), stavudine (d4T), tenofovir (PMPA), zalcitabine (ddC), and zidovudine (AZT). Classical NNRTIs are atevirdine (BHAP U-87201E), delavirdine, efavirenz (DMP-266), emivirine (I-EBU), and nevirapine (BI-RG-587). The tritherapies used as a basic effective treatment of AIDS associate two NRTIs and one NNRTI. Mediates, with Gag polyprotein, the essential events in virion assembly, including binding the plasma membrane, making the protein-protein interactions necessary to create spherical particles, recruiting the viral Env proteins, and packaging the genomic RNA via direct interactions with the RNA packaging sequence (Psi). Gag-Pol polyprotein may regulate its own translation, by the binding genomic RNA in the 5'-UTR. At low concentration, the polyprotein would promote translation, whereas at high concentration, the polyprotein would encapsidate genomic RNA and then shut off translation. Functionally, targets the polyprotein to the plasma membrane via a multipartite membrane-binding signal, that includes its myristoylated N-terminus. Matrix protein is part of the pre-integration complex. Implicated in the release from host cell mediated by Vpu. Binds to RNA. In terms of biological role, forms the conical core that encapsulates the genomic RNA-nucleocapsid complex in the virion. Most core are conical, with only 7% tubular. The core is constituted by capsid protein hexamer subunits. The core is disassembled soon after virion entry. Host restriction factors such as TRIM5-alpha or TRIMCyp bind retroviral capsids and cause premature capsid disassembly, leading to blocks in reverse transcription. Capsid restriction by TRIM5 is one of the factors which restricts HIV-1 to the human species. Host PIN1 apparently facilitates the virion uncoating. On the other hand, interactions with PDZD8 or CYPA stabilize the capsid. Its function is as follows. Encapsulates and protects viral dimeric unspliced genomic RNA (gRNA). Binds these RNAs through its zinc fingers. Acts as a nucleic acid chaperone which is involved in rearangement of nucleic acid secondary structure during gRNA retrotranscription. Also facilitates template switch leading to recombination. As part of the polyprotein, participates in gRNA dimerization, packaging, tRNA incorporation and virion assembly. Aspartyl protease that mediates proteolytic cleavages of Gag and Gag-Pol polyproteins during or shortly after the release of the virion from the plasma membrane. Cleavages take place as an ordered, step-wise cascade to yield mature proteins. This process is called maturation. Displays maximal activity during the budding process just prior to particle release from the cell. Also cleaves Nef and Vif, probably concomitantly with viral structural proteins on maturation of virus particles. Hydrolyzes host EIF4GI and PABP1 in order to shut off the capped cellular mRNA translation. The resulting inhibition of cellular protein synthesis serves to ensure maximal viral gene expression and to evade host immune response. Also mediates cleavage of host YTHDF3. Mediates cleavage of host CARD8, thereby activating the CARD8 inflammasome, leading to the clearance of latent HIV-1 in patient CD4(+) T-cells after viral reactivation; in contrast, HIV-1 can evade CARD8-sensing when its protease remains inactive in infected cells prior to viral budding. Functionally, multifunctional enzyme that converts the viral RNA genome into dsDNA in the cytoplasm, shortly after virus entry into the cell. This enzyme displays a DNA polymerase activity that can copy either DNA or RNA templates, and a ribonuclease H (RNase H) activity that cleaves the RNA strand of RNA-DNA heteroduplexes in a partially processive 3' to 5' endonucleasic mode. Conversion of viral genomic RNA into dsDNA requires many steps. A tRNA(3)-Lys binds to the primer-binding site (PBS) situated at the 5'-end of the viral RNA. RT uses the 3' end of the tRNA primer to perform a short round of RNA-dependent minus-strand DNA synthesis. The reading proceeds through the U5 region and ends after the repeated (R) region which is present at both ends of viral RNA. The portion of the RNA-DNA heteroduplex is digested by the RNase H, resulting in a ssDNA product attached to the tRNA primer. This ssDNA/tRNA hybridizes with the identical R region situated at the 3' end of viral RNA. This template exchange, known as minus-strand DNA strong stop transfer, can be either intra- or intermolecular. RT uses the 3' end of this newly synthesized short ssDNA to perform the RNA-dependent minus-strand DNA synthesis of the whole template. RNase H digests the RNA template except for two polypurine tracts (PPTs) situated at the 5'-end and near the center of the genome. It is not clear if both polymerase and RNase H activities are simultaneous. RNase H probably can proceed both in a polymerase-dependent (RNA cut into small fragments by the same RT performing DNA synthesis) and a polymerase-independent mode (cleavage of remaining RNA fragments by free RTs). Secondly, RT performs DNA-directed plus-strand DNA synthesis using the PPTs that have not been removed by RNase H as primers. PPTs and tRNA primers are then removed by RNase H. The 3' and 5' ssDNA PBS regions hybridize to form a circular dsDNA intermediate. Strand displacement synthesis by RT to the PBS and PPT ends produces a blunt ended, linear dsDNA copy of the viral genome that includes long terminal repeats (LTRs) at both ends. In terms of biological role, catalyzes viral DNA integration into the host chromosome, by performing a series of DNA cutting and joining reactions. This enzyme activity takes place after virion entry into a cell and reverse transcription of the RNA genome in dsDNA. The first step in the integration process is 3' processing. This step requires a complex comprising the viral genome, matrix protein, Vpr and integrase. This complex is called the pre-integration complex (PIC). The integrase protein removes 2 nucleotides from each 3' end of the viral DNA, leaving recessed CA OH's at the 3' ends. In the second step, the PIC enters cell nucleus. This process is mediated through integrase and Vpr proteins, and allows the virus to infect a non dividing cell. This ability to enter the nucleus is specific of lentiviruses, other retroviruses cannot and rely on cell division to access cell chromosomes. In the third step, termed strand transfer, the integrase protein joins the previously processed 3' ends to the 5' ends of strands of target cellular DNA at the site of integration. The 5'-ends are produced by integrase-catalyzed staggered cuts, 5 bp apart. A Y-shaped, gapped, recombination intermediate results, with the 5'-ends of the viral DNA strands and the 3' ends of target DNA strands remaining unjoined, flanking a gap of 5 bp. The last step is viral DNA integration into host chromosome. This involves host DNA repair synthesis in which the 5 bp gaps between the unjoined strands are filled in and then ligated. Since this process occurs at both cuts flanking the HIV genome, a 5 bp duplication of host DNA is produced at the ends of HIV-1 integration. Alternatively, Integrase may catalyze the excision of viral DNA just after strand transfer, this is termed disintegration. This chain is Gag-Pol polyprotein (gag-pol), found in Human immunodeficiency virus type 1 group M subtype A (isolate U455) (HIV-1).